A 41-amino-acid polypeptide reads, in one-letter code: Cytochrome b559 subunit beta (41 aa).

Residues 16–32 (WLAVHALAVPTVFFLGS) traverse the membrane as a helical segment. H20 is a heme binding site.

The protein belongs to the PsbE/PsbF family. As to quaternary structure, heterodimer of an alpha subunit and a beta subunit. PSII is composed of 1 copy each of membrane proteins PsbA, PsbB, PsbC, PsbD, PsbE, PsbF, PsbH, PsbI, PsbJ, PsbK, PsbL, PsbM, PsbT, PsbX, PsbY, PsbZ, Psb30/Ycf12, at least 3 peripheral proteins of the oxygen-evolving complex and a large number of cofactors. It forms dimeric complexes. Requires heme b as cofactor.

It localises to the plastid. Its subcellular location is the chloroplast thylakoid membrane. This b-type cytochrome is tightly associated with the reaction center of photosystem II (PSII). PSII is a light-driven water:plastoquinone oxidoreductase that uses light energy to abstract electrons from H(2)O, generating O(2) and a proton gradient subsequently used for ATP formation. It consists of a core antenna complex that captures photons, and an electron transfer chain that converts photonic excitation into a charge separation. The sequence is that of Cytochrome b559 subunit beta from Nephroselmis olivacea (Green alga).